Here is a 60-residue protein sequence, read N- to C-terminus: Large ribosomal subunit protein bL32 (60 aa).

It belongs to the bacterial ribosomal protein bL32 family.

The protein is Large ribosomal subunit protein bL32 of Borrelia turicatae (strain 91E135).